Consider the following 347-residue polypeptide: UPF0284 protein YN1551_0030 (347 aa).

It belongs to the UPF0284 family.

In Saccharolobus islandicus (strain Y.N.15.51 / Yellowstone #2) (Sulfolobus islandicus), this protein is UPF0284 protein YN1551_0030.